A 95-amino-acid chain; its full sequence is Aspartyl/glutamyl-tRNA(Asn/Gln) amidotransferase subunit C (95 aa).

The protein belongs to the GatC family. Heterotrimer of A, B and C subunits.

It carries out the reaction L-glutamyl-tRNA(Gln) + L-glutamine + ATP + H2O = L-glutaminyl-tRNA(Gln) + L-glutamate + ADP + phosphate + H(+). The enzyme catalyses L-aspartyl-tRNA(Asn) + L-glutamine + ATP + H2O = L-asparaginyl-tRNA(Asn) + L-glutamate + ADP + phosphate + 2 H(+). Allows the formation of correctly charged Asn-tRNA(Asn) or Gln-tRNA(Gln) through the transamidation of misacylated Asp-tRNA(Asn) or Glu-tRNA(Gln) in organisms which lack either or both of asparaginyl-tRNA or glutaminyl-tRNA synthetases. The reaction takes place in the presence of glutamine and ATP through an activated phospho-Asp-tRNA(Asn) or phospho-Glu-tRNA(Gln). This chain is Aspartyl/glutamyl-tRNA(Asn/Gln) amidotransferase subunit C, found in Halorhodospira halophila (strain DSM 244 / SL1) (Ectothiorhodospira halophila (strain DSM 244 / SL1)).